Reading from the N-terminus, the 534-residue chain is Blue-light-activated protein (534 aa).

One can recognise a PAS domain in the interval 20–93 (GKDIFFAAVE…QSIRDAIDQR (74 aa)). Position 70 is an S-4a-FMN cysteine (cysteine 70). The 55-residue stretch at 94 to 148 (VDISTEILNYRKDGSSFWNALFISPVYNDAGELIYFFASQLDISRRRDAEEALRQ) folds into the PAC domain. A Histidine kinase domain is found at 161–390 (GIAHDFNNLL…TLRLYFPVDE (230 aa)). At histidine 164 the chain carries Phosphohistidine; by autocatalysis. Residues 411–527 (RILIVEDRPD…DLARKVRQVL (117 aa)) enclose the Response regulatory domain. Aspartate 461 carries the 4-aspartylphosphate modification.

Post-translationally, FMN binds covalently to cysteine after exposure to blue light and this bond is spontaneously broken in the dark.

It catalyses the reaction ATP + protein L-histidine = ADP + protein N-phospho-L-histidine.. Functionally, photosensitive kinase and response regulator that is involved in increased bacterial virulence upon exposure to light. The protein is Blue-light-activated protein of Pseudomonas syringae pv. syringae (strain B728a).